The primary structure comprises 358 residues: Peptide chain release factor 1 (358 aa).

Residue Gln233 is modified to N5-methylglutamine.

Belongs to the prokaryotic/mitochondrial release factor family. Methylated by PrmC. Methylation increases the termination efficiency of RF1.

The protein localises to the cytoplasm. In terms of biological role, peptide chain release factor 1 directs the termination of translation in response to the peptide chain termination codons UAG and UAA. In Clostridium botulinum (strain Okra / Type B1), this protein is Peptide chain release factor 1.